The chain runs to 394 residues: Junctional adhesion molecule-like (394 aa).

The N-terminal stretch at 1 to 19 (MFCPLKLILLPVLLDYSLG) is a signal peptide. 2 consecutive Ig-like V-type domains span residues 20–132 (LNDL…KAVV) and 137–250 (PEEP…IVLH). The Extracellular segment spans residues 20 to 275 (LNDLNVSPPE…RPLVLGGNQL (256 aa)). 2 cysteine pairs are disulfide-bonded: cysteine 42-cysteine 116 and cysteine 155-cysteine 234. Asparagine 76 and asparagine 231 each carry an N-linked (GlcNAc...) asparagine glycan. A helical transmembrane segment spans residues 276–296 (VIIVGIVCATILLLPVLILIV). Residues 297-394 (KKTCGNKSSV…GGMPKTQQAF (98 aa)) lie on the Cytoplasmic side of the membrane. Residues 369-394 (PSLRSDRNNSLEKKSGGGMPKTQQAF) are disordered. Basic and acidic residues predominate over residues 372–383 (RSDRNNSLEKKS).

It belongs to the immunoglobulin superfamily. As to quaternary structure, homodimer; active form in leukocyte-endothelial cell adhesion. Interacts (homodimeric form) with CXADR. Interacts (via cytoplasmic domain) with the PI3 kinase; upon CXADR-binding. Interacts with ITGA4 and ITGB1; integrin alpha-4/beta-1 may regulate leukocyte to endothelial cells adhesion by controlling JAML homodimerization. As to expression, expression is restricted to the hematopoietic tissues with the exception of liver. Expressed in fetal liver, spleen and thymus. Preferentially expressed by mature leukocytes (at protein level).

The protein localises to the cell membrane. It is found in the cell junction. Functionally, transmembrane protein of the plasma membrane of leukocytes that control their migration and activation through interaction with CXADR, a plasma membrane receptor found on adjacent epithelial and endothelial cells. The interaction between both receptors mediates the activation of gamma-delta T-cells, a subpopulation of T-cells residing in epithelia and involved in tissue homeostasis and repair. Upon epithelial CXADR-binding, JAML induces downstream cell signaling events in gamma-delta T-cells through PI3-kinase and MAP kinases. It results in proliferation and production of cytokines and growth factors by T-cells that in turn stimulate epithelial tissues repair. It also controls the transmigration of leukocytes within epithelial and endothelial tissues through adhesive interactions with epithelial and endothelial CXADR. The chain is Junctional adhesion molecule-like from Homo sapiens (Human).